A 265-amino-acid chain; its full sequence is 3-methyl-2-oxobutanoate hydroxymethyltransferase (265 aa).

2 residues coordinate Mg(2+): Asp45 and Asp84. Residues 45–46 (DS), Asp84, and Lys112 each bind 3-methyl-2-oxobutanoate. Glu114 contributes to the Mg(2+) binding site. Residue Glu181 is the Proton acceptor of the active site.

The protein belongs to the PanB family. In terms of assembly, homodecamer; pentamer of dimers. Requires Mg(2+) as cofactor.

It is found in the cytoplasm. It carries out the reaction 3-methyl-2-oxobutanoate + (6R)-5,10-methylene-5,6,7,8-tetrahydrofolate + H2O = 2-dehydropantoate + (6S)-5,6,7,8-tetrahydrofolate. The protein operates within cofactor biosynthesis; (R)-pantothenate biosynthesis; (R)-pantoate from 3-methyl-2-oxobutanoate: step 1/2. Functionally, catalyzes the reversible reaction in which hydroxymethyl group from 5,10-methylenetetrahydrofolate is transferred onto alpha-ketoisovalerate to form ketopantoate. The protein is 3-methyl-2-oxobutanoate hydroxymethyltransferase of Wigglesworthia glossinidia brevipalpis.